The sequence spans 310 residues: Homoserine kinase (310 aa).

91 to 101 (PIGSGLGSSAC) contacts ATP.

Belongs to the GHMP kinase family. Homoserine kinase subfamily.

Its subcellular location is the cytoplasm. The enzyme catalyses L-homoserine + ATP = O-phospho-L-homoserine + ADP + H(+). Its pathway is amino-acid biosynthesis; L-threonine biosynthesis; L-threonine from L-aspartate: step 4/5. In terms of biological role, catalyzes the ATP-dependent phosphorylation of L-homoserine to L-homoserine phosphate. The polypeptide is Homoserine kinase (Shigella sonnei (strain Ss046)).